The following is a 316-amino-acid chain: D-alanine--D-alanine ligase (316 aa).

The ATP-grasp domain occupies 107–303; it reads KEVFAARGLT…FEDLVERILI (197 aa). An ATP-binding site is contributed by 133–188; that stretch reads AEGFGYPVVVKPSQEGSSVGVSIVKSPEELPSALELAFRYDDDILVERFIKGREIQ. Mg(2+) contacts are provided by D256, E269, and N271.

Belongs to the D-alanine--D-alanine ligase family. Requires Mg(2+) as cofactor. It depends on Mn(2+) as a cofactor.

The protein resides in the cytoplasm. The enzyme catalyses 2 D-alanine + ATP = D-alanyl-D-alanine + ADP + phosphate + H(+). It functions in the pathway cell wall biogenesis; peptidoglycan biosynthesis. Its function is as follows. Cell wall formation. The sequence is that of D-alanine--D-alanine ligase from Geobacter sulfurreducens (strain ATCC 51573 / DSM 12127 / PCA).